A 449-amino-acid chain; its full sequence is Biotin carboxylase (449 aa).

The Biotin carboxylation domain occupies 1–445 (MLDKIVIANR…NIHYLEKKLG (445 aa)). Residues Lys-116, Lys-159, 165 to 166 (GG), 201 to 204 (EKYL), His-209, and His-236 each bind ATP. The region spanning 120 to 317 (IAAMKKAGVP…LIKEQLRIAA (198 aa)) is the ATP-grasp domain. Lys-238 provides a ligand contact to hydrogencarbonate. 2 residues coordinate ATP: Glu-276 and Glu-288. The Mg(2+) site is built by Glu-276, Glu-288, and Asn-290. Mn(2+) contacts are provided by Glu-276, Glu-288, and Asn-290. Hydrogencarbonate contacts are provided by Arg-292, Val-295, and Arg-338. Arg-292 is an active-site residue. Arg-338 is a binding site for biotin.

Acetyl-CoA carboxylase is a heterohexamer of biotin carboxyl carrier protein, biotin carboxylase and the two subunits of carboxyl transferase in a 2:2 complex. It depends on Mg(2+) as a cofactor. Mn(2+) is required as a cofactor.

It catalyses the reaction N(6)-biotinyl-L-lysyl-[protein] + hydrogencarbonate + ATP = N(6)-carboxybiotinyl-L-lysyl-[protein] + ADP + phosphate + H(+). The protein operates within lipid metabolism; malonyl-CoA biosynthesis; malonyl-CoA from acetyl-CoA: step 1/1. Its function is as follows. This protein is a component of the acetyl coenzyme A carboxylase complex; first, biotin carboxylase catalyzes the carboxylation of the carrier protein and then the transcarboxylase transfers the carboxyl group to form malonyl-CoA. The sequence is that of Biotin carboxylase (accC) from Escherichia coli (strain K12).